We begin with the raw amino-acid sequence, 397 residues long: Erythromycin C-12 hydroxylase (397 aa).

74–75 provides a ligand contact to substrate; it reads HE. Residues H81 and R85 each contribute to the heme site. Q278 is a binding site for substrate. Position 279 (R279) interacts with heme. The span at 307 to 322 shows a compositional bias: basic and acidic residues; that stretch reads RDSDAHDDPDRFDPSR. Residues 307 to 326 form a disordered region; that stretch reads RDSDAHDDPDRFDPSRKSGG. H337 and C339 together coordinate heme.

It belongs to the cytochrome P450 family. In terms of assembly, monomer. The cofactor is heme b.

It catalyses the reaction erythromycin D + NADPH + O2 + H(+) = erythromycin C + NADP(+) + H2O. Its pathway is antibiotic biosynthesis; erythromycin biosynthesis. Its function is as follows. Responsible for the C-12 hydroxylation of the macrolactone ring of erythromycin. Thus, EryK catalyzes the hydroxylation of erythromycin D (ErD) at the C-12 position to produce erythromycin C (ErC). Erythromycin B (ErB) is not a substrate for this enzyme. The sequence is that of Erythromycin C-12 hydroxylase (eryK) from Saccharopolyspora erythraea (strain ATCC 11635 / DSM 40517 / JCM 4748 / NBRC 13426 / NCIMB 8594 / NRRL 2338).